Here is a 481-residue protein sequence, read N- to C-terminus: NADH-quinone oxidoreductase subunit N (481 aa).

Transmembrane regions (helical) follow at residues Met-9–Val-29, Ala-39–Ala-59, Cys-76–Ala-96, Phe-104–Phe-124, Phe-158–Gly-178, Ala-205–Val-225, Pro-232–Ala-252, Ile-265–Leu-285, Leu-293–Gly-313, Ala-318–Leu-338, Phe-359–Gly-379, Val-399–Phe-419, and Leu-443–Ala-463.

Belongs to the complex I subunit 2 family. NDH-1 is composed of 14 different subunits. Subunits NuoA, H, J, K, L, M, N constitute the membrane sector of the complex.

It localises to the cell inner membrane. The catalysed reaction is a quinone + NADH + 5 H(+)(in) = a quinol + NAD(+) + 4 H(+)(out). Its function is as follows. NDH-1 shuttles electrons from NADH, via FMN and iron-sulfur (Fe-S) centers, to quinones in the respiratory chain. The immediate electron acceptor for the enzyme in this species is believed to be ubiquinone. Couples the redox reaction to proton translocation (for every two electrons transferred, four hydrogen ions are translocated across the cytoplasmic membrane), and thus conserves the redox energy in a proton gradient. This Anaplasma marginale (strain Florida) protein is NADH-quinone oxidoreductase subunit N.